The following is a 217-amino-acid chain: 3,4-dihydroxy-2-butanone 4-phosphate synthase (217 aa).

D-ribulose 5-phosphate contacts are provided by residues 37-38 (RE), Asp-42, 150-154 (RGGHT), and Glu-174. Residue Glu-38 coordinates Mg(2+). Mg(2+) is bound at residue His-153.

The protein belongs to the DHBP synthase family. Homodimer. It depends on Mg(2+) as a cofactor. Requires Mn(2+) as cofactor.

The enzyme catalyses D-ribulose 5-phosphate = (2S)-2-hydroxy-3-oxobutyl phosphate + formate + H(+). Its pathway is cofactor biosynthesis; riboflavin biosynthesis; 2-hydroxy-3-oxobutyl phosphate from D-ribulose 5-phosphate: step 1/1. Catalyzes the conversion of D-ribulose 5-phosphate to formate and 3,4-dihydroxy-2-butanone 4-phosphate. This Escherichia coli O127:H6 (strain E2348/69 / EPEC) protein is 3,4-dihydroxy-2-butanone 4-phosphate synthase.